A 249-amino-acid chain; its full sequence is tRNA pseudouridine synthase A (249 aa).

Aspartate 52 functions as the Nucleophile in the catalytic mechanism. Tyrosine 111 contributes to the substrate binding site.

The protein belongs to the tRNA pseudouridine synthase TruA family. Homodimer.

It catalyses the reaction uridine(38/39/40) in tRNA = pseudouridine(38/39/40) in tRNA. Functionally, formation of pseudouridine at positions 38, 39 and 40 in the anticodon stem and loop of transfer RNAs. The protein is tRNA pseudouridine synthase A of Caulobacter sp. (strain K31).